The chain runs to 228 residues: Ribulose-phosphate 3-epimerase (228 aa).

Ser-9 lines the substrate pocket. A divalent metal cation-binding residues include His-34, Asp-36, His-68, and Asp-177. The active-site Proton acceptor is Asp-36. Substrate is bound by residues His-68, 177–179 (DGG), and 199–200 (GS). Asp-177 acts as the Proton donor in catalysis.

This sequence belongs to the ribulose-phosphate 3-epimerase family. It depends on a divalent metal cation as a cofactor.

It carries out the reaction D-ribulose 5-phosphate = D-xylulose 5-phosphate. It functions in the pathway carbohydrate degradation. In terms of biological role, catalyzes the reversible epimerization of D-ribulose 5-phosphate to D-xylulose 5-phosphate. This chain is Ribulose-phosphate 3-epimerase, found in Buchnera aphidicola subsp. Schizaphis graminum (strain Sg).